Consider the following 1558-residue polypeptide: ABC transporter NFT1 (1558 aa).

Residues 1 to 29 (MIKNGTCPFWERDDLSECARREYIEFKFP) lie on the Extracellular side of the membrane. N4 carries N-linked (GlcNAc...) asparagine glycosylation. The chain crosses the membrane as a helical span at residues 30 to 50 (LFILLTGMIYAFCKVFRAFYL). Residues 51 to 103 (RRKNHTNEAPEFEEQGNGNHEYARFSVLRLKSAWESRSFCNVNNRSTFDKFKK) lie on the Cytoplasmic side of the membrane. The chain crosses the membrane as a helical span at residues 104–124 (FIEGAFIVLQLTIHLYILSNM). The Extracellular portion of the chain corresponds to 125 to 130 (PMDNKK). Residues 131–151 (FFHQGFLVQMFLWILLLVVIT) traverse the membrane as a helical segment. Residues 152 to 169 (LRLISASQSFRWVLACKR) are Cytoplasmic-facing. Residues 170 to 190 (DLWAVSFYSYASLFTLSILPL) form a helical membrane-spanning segment. Topologically, residues 191–201 (RSVFIGKIKDK) are extracellular. The helical transmembrane segment at 202–222 (IMVKYIISETFIDLALLLLLS) threads the bilayer. Residues 223–302 (TSSIEGTRYS…SSKKGRLLPN (80 aa)) lie on the Cytoplasmic side of the membrane. A helical transmembrane segment spans residues 303–323 (IICYFKAVFISQLFLAFVSSF). In terms of domain architecture, ABC transmembrane type-1 1 spans 311-621 (FISQLFLAFV…IASTVSLLIQ (311 aa)). The Extracellular portion of the chain corresponds to 324 to 351 (LNFVPSLLMPRILSYVNDPKSQSWNLVS). The chain crosses the membrane as a helical span at residues 352–374 (LYVSSMLVSKIIATTCRGQGLFL). Residues 375–449 (GEKGTMQLRT…VMSIDAFKVS (75 aa)) lie on the Cytoplasmic side of the membrane. A disordered region spans residues 410 to 434 (NASTSFEENPDSSEAEPRKKSSRKD). Positions 424 to 434 (AEPRKKSSRKD) are enriched in basic and acidic residues. A helical transmembrane segment spans residues 450 to 470 (EAMNTFYLACEAVFMTVTALM). Topologically, residues 471-481 (ILYSLLGWSAF) are extracellular. Residues 482–504 (AGTFALLAMIPLNFWCATFYGNY) traverse the membrane as a helical segment. The Cytoplasmic portion of the chain corresponds to 505-558 (QADQLILTDKRTSGISEALNSIRVIKLLAWENLFYQKIINVRDGEIRLLKKKAT). The helical transmembrane segment at 559 to 579 (IFFLNHLIWFFGPTLVSAITF) threads the bilayer. Topologically, residues 580-584 (SVFIK) are extracellular. Residues 585–605 (FQNQTLTPTIAFTALSLFAIL) traverse the membrane as a helical segment. At 606 to 953 (RTPMDQIAST…KFSAYKWLAD (348 aa)) the chain is on the cytoplasmic side. The 242-residue stretch at 651–892 (FGFEDASMEW…NEFLRESINN (242 aa)) folds into the ABC transporter 1 domain. 686 to 693 (GPTGSGKS) contributes to the ATP binding site. Over residues 892–901 (NDSKNTTHNQ) the composition is skewed to polar residues. The interval 892–926 (NDSKNTTHNQIDLKRSTTSKKTKNGDPEGENSQDE) is disordered. Residues 954-974 (YFGGLGVVFVFTSSAILIHGI) traverse the membrane as a helical segment. The ABC transmembrane type-1 2 domain maps to 961–1251 (VFVFTSSAIL…IIKVFSSVEL (291 aa)). Topologically, residues 975–1013 (TLSQGFWLRYWLETGSSGSKSTWLYRIVEGHSNIYFILT) are extracellular. A helical transmembrane segment spans residues 1014-1034 (YIVIGFVSSFLTSGKVWIAII). The Cytoplasmic portion of the chain corresponds to 1035–1082 (SGTNVTKKIFAKLLSSILYAKLRFHNVTPTGRIMNRFSKDMDIIDQQL). The chain crosses the membrane as a helical span at residues 1083-1105 (IPNFEGLSYSVVVCLWIILLIGY). Residues 1106-1109 (VTPQ) are Extracellular-facing. Residues 1110 to 1132 (FLLFAIPLCALYYTVCTLYLRAS) form a helical membrane-spanning segment. Residues 1133–1199 (RELKRIDNIN…ATEWITYRVD (67 aa)) are Cytoplasmic-facing. The chain crosses the membrane as a helical span at residues 1200-1220 (IIGTLVLFSSSVMIIMKASYL). Residues 1221-1222 (DA) lie on the Extracellular side of the membrane. Residues 1223 to 1243 (GLAGILLSNAFSFTETAQWII) traverse the membrane as a helical segment. The Cytoplasmic segment spans residues 1244-1558 (KVFSSVELLM…LAKVSFDNKR (315 aa)). Positions 1285-1538 (VELKNLSLRY…RNTIFYRLCR (254 aa)) constitute an ABC transporter 2 domain. 1319–1326 (GRTGAGKS) provides a ligand contact to ATP.

Belongs to the ABC transporter superfamily. ABCC family. Conjugate transporter (TC 3.A.1.208) subfamily.

It is found in the membrane. This Saccharomyces cerevisiae (strain YJM789) (Baker's yeast) protein is ABC transporter NFT1 (NFT1).